The primary structure comprises 364 residues: MPTIENEPKLDFKDVLLRPKRSTLKSRADVDLVREFVFRNSKKKYVGIPIVASNMDTVGTFEVAESLSKKRLFTTIHKHYSVDQWMEFVNRISSNQDILSQIGISSGISDYDFTKLKKICGLIPELQYICLDVANGYSEVFVDFIRRVREEFPRHTIFAGNVVTGEMTEELILSGADVVKVGIGSGSVCTTRKKAGVGYPQLSAVLECADASHGLNGHVMSDGGCTNPGDVAKALGAGADFVMIGGLFAGHDQCGGDTVEKDGQKYKLFYGMSSDTAMEKHEGSVAEYRASEGKTITVPYRGDISKTVQDLLGGLRSACTYTGAKKLKELSKRATFVRVTQQTNEQYATFEISPSELQNLNIAV.

NADP(+)-binding positions include 26 to 27 (SR), Lys78, 132 to 134 (DVA), and 183 to 184 (IG). K(+) contacts are provided by Gly184, Gly186, and Cys189. Cys189 (thioimidate intermediate) is an active-site residue. Catalysis depends on Thr191, which acts as the Proton donor/acceptor. Arg192 is a binding site for K(+). GMP is bound by residues 222–224 (DGG), 245–246 (GG), 271–273 (GMS), and 289–293 (RASEG). Residues Met272, 288–289 (YR), and 317–320 (SACT) contribute to the NADP(+) site.

It belongs to the IMPDH/GMPR family. GuaC type 1 subfamily. As to quaternary structure, homotetramer.

It carries out the reaction IMP + NH4(+) + NADP(+) = GMP + NADPH + 2 H(+). In terms of biological role, catalyzes the irreversible NADPH-dependent deamination of GMP to IMP. It functions in the conversion of nucleobase, nucleoside and nucleotide derivatives of G to A nucleotides, and in maintaining the intracellular balance of A and G nucleotides. The sequence is that of GMP reductase (gmr-1) from Onchocerca volvulus.